The sequence spans 32 residues: Ranatuerin-2BYa (32 aa).

Residues Cys27 and Cys32 are joined by a disulfide bond.

In terms of tissue distribution, expressed by the skin glands.

The protein localises to the secreted. Its function is as follows. Antibacterial activity against Gram-positive bacterium S.aureus and Gram-negative bacterium E.coli. Weak hemolytic activity. The chain is Ranatuerin-2BYa from Rana boylii (Foothill yellow-legged frog).